The sequence spans 363 residues: GDSL esterase/lipase At1g29670 (363 aa).

A signal peptide spans 1–24 (MESYLTKWCVVLVLLCFGFSVVKA). Ser39 functions as the Nucleophile in the catalytic mechanism. Residues Asp327 and His330 contribute to the active site.

It belongs to the 'GDSL' lipolytic enzyme family.

Its subcellular location is the secreted. The sequence is that of GDSL esterase/lipase At1g29670 from Arabidopsis thaliana (Mouse-ear cress).